Consider the following 367-residue polypeptide: Peptide chain release factor 2 (367 aa).

Residue Gln-250 is modified to N5-methylglutamine.

This sequence belongs to the prokaryotic/mitochondrial release factor family. Methylated by PrmC. Methylation increases the termination efficiency of RF2.

Its subcellular location is the cytoplasm. Functionally, peptide chain release factor 2 directs the termination of translation in response to the peptide chain termination codons UGA and UAA. The sequence is that of Peptide chain release factor 2 from Mycobacteroides abscessus (strain ATCC 19977 / DSM 44196 / CCUG 20993 / CIP 104536 / JCM 13569 / NCTC 13031 / TMC 1543 / L948) (Mycobacterium abscessus).